The sequence spans 313 residues: uncharacterized protein (313 aa).

The signal sequence occupies residues 1 to 24; that stretch reads MKRRRRWRGWLLFLALCFCLLCEA. N-linked (GlcNAc...) asparagine; by host glycans are attached at residues N28, N43, N57, N77, N101, N102, N109, N149, N168, N215, N222, N251, N254, and N267. Residues 47–73 form a disordered region; the sequence is ATTGTTTTSPNVTSTTSNTVTTPTTVS. Residues 90 to 114 show a composition bias toward low complexity; sequence STVSGTRNTRNNNTTTIGTNATSPS. A disordered region spans residues 90–117; it reads STVSGTRNTRNNNTTTIGTNATSPSSSV.

Belongs to the HHV-5 US34A protein family.

This is an uncharacterized protein from Homo sapiens (Human).